The sequence spans 103 residues: Small ribosomal subunit protein uS10 (103 aa).

The protein belongs to the universal ribosomal protein uS10 family. In terms of assembly, part of the 30S ribosomal subunit.

In terms of biological role, involved in the binding of tRNA to the ribosomes. This chain is Small ribosomal subunit protein uS10, found in Sulfurovum sp. (strain NBC37-1).